The primary structure comprises 326 residues: MERLNNMGKNSIKKVTVVGTGVIGNGWISRFLSQGYDVVATDPAKNAEVRMRQSIENAWPALEKQGLAEGASKDRLTFELDLAKAVADADLIQENVPEREALKRRVLAEIDHFSKSEAIIASSTSGLKPSILQEDCQRPERVIVAHPFNPVYLIPLVEVIGGKDTSPETINISEQFYQSIKMKPLVISTEVEGHIADRLMEAIWREALHLINDGVATTEEVDAAIIYGPGLRWALMGPFLTLHLAGGEQGMRYMLEQFGPALKLPWTKLVAPELTNELANRVVEGCEAQTTGYSIKKLEQRRDEFLIELIQLLEKYWPGANLKGKL.

NAD(+) is bound at residue 19 to 24; the sequence is GTGVIG.

The protein belongs to the 3-hydroxyacyl-CoA dehydrogenase family. L-carnitine dehydrogenase subfamily. As to quaternary structure, homodimer.

Its subcellular location is the cytoplasm. The enzyme catalyses carnitine + NAD(+) = 3-dehydrocarnitine + NADH + H(+). Its pathway is amine and polyamine metabolism; carnitine metabolism. Functionally, catalyzes the NAD(+)-dependent oxidation of L-carnitine to 3-dehydrocarnitine. In Bacillus cereus (strain ZK / E33L), this protein is L-carnitine dehydrogenase.